The chain runs to 228 residues: FCS-Like Zinc finger 12 (228 aa).

Residues 162 to 205 (DFLTSCCLCKKKLQGKDIYMYKGDEGFCSKECRSLKIMEDSLKE) form an FLZ-type zinc finger.

The protein belongs to the FLZ family. In terms of assembly, interacts with KIN10 and KIN11 via its FLZ-type zinc finger domain. Interacts with KINB1 and KINB2 via its N-terminal part. Forms homodimer and heterodimer with FLZ2 and FLZ10 in vitro.

Functionally, may act as an adapter to facilitate the interaction of SnRK1 complex with effector proteins, conferring tissue- and stimulus-type specific differences in the SnRK1 regulation pathway. The chain is FCS-Like Zinc finger 12 from Arabidopsis thaliana (Mouse-ear cress).